The primary structure comprises 312 residues: Small ribosomal subunit biogenesis GTPase RsgA (312 aa).

The region spanning 86–245 (QSFLKRPAVA…LADTPGFNRP (160 aa)) is the CP-type G domain. GTP-binding positions include 135–138 (TKID) and 187–195 (GPSGVGKTS). Zn(2+)-binding residues include Cys270, Cys275, His277, and Cys283.

It belongs to the TRAFAC class YlqF/YawG GTPase family. RsgA subfamily. In terms of assembly, monomer. Associates with 30S ribosomal subunit, binds 16S rRNA. Zn(2+) is required as a cofactor.

It localises to the cytoplasm. One of several proteins that assist in the late maturation steps of the functional core of the 30S ribosomal subunit. Helps release RbfA from mature subunits. May play a role in the assembly of ribosomal proteins into the subunit. Circularly permuted GTPase that catalyzes slow GTP hydrolysis, GTPase activity is stimulated by the 30S ribosomal subunit. The sequence is that of Small ribosomal subunit biogenesis GTPase RsgA from Prochlorococcus marinus (strain NATL2A).